The primary structure comprises 122 residues: Beta-2-microglobulin (122 aa).

A signal peptide spans 1-22 (MMARIFILALLGQLCFLPYLDA). Positions 27 to 115 (PKVQVYSRHP…HLTLQEPKVV (89 aa)) constitute an Ig-like C1-type domain. An intrachain disulfide couples C47 to C102.

It belongs to the beta-2-microglobulin family. In terms of assembly, heterodimer of an alpha chain and a beta chain. Beta-2-microglobulin is the beta-chain of major histocompatibility complex class I molecules.

The protein resides in the secreted. Component of the class I major histocompatibility complex (MHC). Involved in the presentation of peptide antigens to the immune system. The chain is Beta-2-microglobulin (B2M) from Trichosurus vulpecula (Brush-tailed possum).